Reading from the N-terminus, the 172-residue chain is MLIGVISDTHIPDRASEIPEAVFDAFRDVELILHAGDLTSPDILTELETLAPVECVQGNMDRHYGIETPRSRLFEIESFRVGLIHGEVYPRGDTQQLRYLGLELGADVLISGHTHQPFIRELEDMVLLNPGSPTVPRLTDPSVMVLRIDGEKLDAEIIRTGAPVCRSLNFRR.

A divalent metal cation contacts are provided by D8, H10, D37, N59, H85, H113, and H115.

The protein belongs to the metallophosphoesterase superfamily. YfcE family. A divalent metal cation is required as a cofactor.

In Methanothermobacter thermautotrophicus (strain ATCC 29096 / DSM 1053 / JCM 10044 / NBRC 100330 / Delta H) (Methanobacterium thermoautotrophicum), this protein is Probable metallophosphoesterase MTH_1774.